The sequence spans 317 residues: Homoserine kinase (317 aa).

95 to 105 (PHSRGLGSSAA) contacts ATP.

This sequence belongs to the GHMP kinase family. Homoserine kinase subfamily.

Its subcellular location is the cytoplasm. It catalyses the reaction L-homoserine + ATP = O-phospho-L-homoserine + ADP + H(+). Its pathway is amino-acid biosynthesis; L-threonine biosynthesis; L-threonine from L-aspartate: step 4/5. Functionally, catalyzes the ATP-dependent phosphorylation of L-homoserine to L-homoserine phosphate. This chain is Homoserine kinase, found in Mycolicibacterium smegmatis (strain ATCC 700084 / mc(2)155) (Mycobacterium smegmatis).